A 276-amino-acid polypeptide reads, in one-letter code: 2-dehydro-3-deoxyphosphooctonate aldolase (276 aa).

This sequence belongs to the KdsA family.

It is found in the cytoplasm. It carries out the reaction D-arabinose 5-phosphate + phosphoenolpyruvate + H2O = 3-deoxy-alpha-D-manno-2-octulosonate-8-phosphate + phosphate. It participates in carbohydrate biosynthesis; 3-deoxy-D-manno-octulosonate biosynthesis; 3-deoxy-D-manno-octulosonate from D-ribulose 5-phosphate: step 2/3. The protein operates within bacterial outer membrane biogenesis; lipopolysaccharide biosynthesis. The chain is 2-dehydro-3-deoxyphosphooctonate aldolase from Xylella fastidiosa (strain 9a5c).